We begin with the raw amino-acid sequence, 20 residues long: Ribosome-inactivating protein (20 aa).

Positions 1-20 (NVRFDLSGATSSSYKTFIKN) are disordered. The segment covering 8 to 20 (GATSSSYKTFIKN) has biased composition (polar residues).

This sequence belongs to the ribosome-inactivating protein family. Type 1 RIP subfamily.

It carries out the reaction Endohydrolysis of the N-glycosidic bond at one specific adenosine on the 28S rRNA.. The sequence is that of Ribosome-inactivating protein from Cucurbita pepo (Vegetable marrow).